The primary structure comprises 221 residues: Molybdenum cofactor guanylyltransferase (221 aa).

Residues 18-20, Lys35, Asn63, Asp81, and Asp112 contribute to the GTP site; that span reads IAG. Asp112 contributes to the Mg(2+) binding site.

This sequence belongs to the MobA family. As to quaternary structure, monomer. Mg(2+) serves as cofactor.

Its subcellular location is the cytoplasm. It catalyses the reaction Mo-molybdopterin + GTP + H(+) = Mo-molybdopterin guanine dinucleotide + diphosphate. In terms of biological role, transfers a GMP moiety from GTP to Mo-molybdopterin (Mo-MPT) cofactor (Moco or molybdenum cofactor) to form Mo-molybdopterin guanine dinucleotide (Mo-MGD) cofactor. This Brucella abortus (strain S19) protein is Molybdenum cofactor guanylyltransferase.